A 124-amino-acid chain; its full sequence is Non-structural protein 2 (124 aa).

The DLNP; interaction with MAP1B motif lies at 121-124 (DLNP).

It belongs to the pneumovirus non-structural protein 2 family. As to quaternary structure, monomer (instable). Homomultimer. Heteromultimer with NS1. Interacts with host RIGI (via N-terminus); this interaction prevents host signaling pathway involved in interferon production. Interacts with host MAP1B/microtubule-associated protein 1B.

The protein resides in the host mitochondrion. Its function is as follows. Plays a major role in antagonizing the type I IFN-mediated antiviral response. Acts cooperatively with NS1 to repress activation and nuclear translocation of host IFN-regulatory factor IRF3. Interacts with the host cytoplasmic sensor of viral nucleic acids RIGI and prevents the interaction with its downstream partner MAVS. Together with NS2, participates in the proteasomal degradation of host STAT2, IRF3, IRF7, TBK1 and RIGI through a NS-degradasome involving CUL2 and Elongin-C. The degradasome requires an intact mitochondrial MAVS. Induces host SOCS1 expression. Induces activation of NF-kappa-B. Suppresses premature apoptosis by an NF-kappa-B-dependent, interferon-independent mechanism promoting continued viral replication. The chain is Non-structural protein 2 (1B) from Human respiratory syncytial virus B (strain 18537).